Here is a 173-residue protein sequence, read N- to C-terminus: Dual-action ribosomal maturation protein DarP (173 aa).

The protein belongs to the DarP family.

Its subcellular location is the cytoplasm. Its function is as follows. Member of a network of 50S ribosomal subunit biogenesis factors which assembles along the 30S-50S interface, preventing incorrect 23S rRNA structures from forming. Promotes peptidyl transferase center (PTC) maturation. This chain is Dual-action ribosomal maturation protein DarP, found in Pseudomonas putida (strain GB-1).